A 199-amino-acid polypeptide reads, in one-letter code: Glycerol-3-phosphate acyltransferase (199 aa).

Transmembrane regions (helical) follow at residues 2 to 22, 77 to 97, 113 to 133, and 139 to 159; these read LEVLLVLLGYVLGSVPTGILV, PWVLAAVALAAVVGHCWPVFL, IALAPPVGLGMFALWWVVALA, and LAAMVVTVVSPFAFLLSGQPL.

This sequence belongs to the PlsY family. As to quaternary structure, probably interacts with PlsX.

The protein resides in the cell membrane. It carries out the reaction an acyl phosphate + sn-glycerol 3-phosphate = a 1-acyl-sn-glycero-3-phosphate + phosphate. The protein operates within lipid metabolism; phospholipid metabolism. Functionally, catalyzes the transfer of an acyl group from acyl-phosphate (acyl-PO(4)) to glycerol-3-phosphate (G3P) to form lysophosphatidic acid (LPA). This enzyme utilizes acyl-phosphate as fatty acyl donor, but not acyl-CoA or acyl-ACP. This Rubrobacter xylanophilus (strain DSM 9941 / JCM 11954 / NBRC 16129 / PRD-1) protein is Glycerol-3-phosphate acyltransferase.